A 220-amino-acid polypeptide reads, in one-letter code: Deoxyribose-phosphate aldolase (220 aa).

The active-site Proton donor/acceptor is the Asp92. Lys155 acts as the Schiff-base intermediate with acetaldehyde in catalysis. The active-site Proton donor/acceptor is the Lys184.

The protein belongs to the DeoC/FbaB aldolase family. DeoC type 1 subfamily.

The protein localises to the cytoplasm. The catalysed reaction is 2-deoxy-D-ribose 5-phosphate = D-glyceraldehyde 3-phosphate + acetaldehyde. It functions in the pathway carbohydrate degradation; 2-deoxy-D-ribose 1-phosphate degradation; D-glyceraldehyde 3-phosphate and acetaldehyde from 2-deoxy-alpha-D-ribose 1-phosphate: step 2/2. Catalyzes a reversible aldol reaction between acetaldehyde and D-glyceraldehyde 3-phosphate to generate 2-deoxy-D-ribose 5-phosphate. The polypeptide is Deoxyribose-phosphate aldolase (Symbiobacterium thermophilum (strain DSM 24528 / JCM 14929 / IAM 14863 / T)).